A 183-amino-acid chain; its full sequence is Macro domain-containing protein (183 aa).

Residues 1–174 (MKKVHLIQAD…IYKNILSNID (174 aa)) enclose the Macro domain.

The protein belongs to the MacroD-type family.

This chain is Macro domain-containing protein, found in Acinetobacter sp. (strain ED45-25).